Reading from the N-terminus, the 84-residue chain is uncharacterized protein (84 aa).

3 helical membrane-spanning segments follow: residues 4–20, 27–49, and 59–81; these read AYVL…IKYG, VWKA…WIAF, and IGLA…VYVL.

Its subcellular location is the cell membrane. This is an uncharacterized protein from Archaeoglobus fulgidus (strain ATCC 49558 / DSM 4304 / JCM 9628 / NBRC 100126 / VC-16).